The primary structure comprises 199 residues: Chaperone protein TorD (199 aa).

This sequence belongs to the TorD/DmsD family. TorD subfamily.

It localises to the cytoplasm. Functionally, involved in the biogenesis of TorA. Acts on TorA before the insertion of the molybdenum cofactor and, as a result, probably favors a conformation of the apoenzyme that is competent for acquiring the cofactor. The protein is Chaperone protein TorD of Escherichia coli (strain K12 / MC4100 / BW2952).